The sequence spans 463 residues: Kynurenine 3-monooxygenase (463 aa).

The protein belongs to the aromatic-ring hydroxylase family. KMO subfamily. FAD serves as cofactor.

The protein resides in the mitochondrion outer membrane. It catalyses the reaction L-kynurenine + NADPH + O2 + H(+) = 3-hydroxy-L-kynurenine + NADP(+) + H2O. The protein operates within cofactor biosynthesis; NAD(+) biosynthesis; quinolinate from L-kynurenine: step 1/3. Catalyzes the hydroxylation of L-kynurenine (L-Kyn) to form 3-hydroxy-L-kynurenine (L-3OHKyn). Required for synthesis of quinolinic acid. The protein is Kynurenine 3-monooxygenase of Yarrowia lipolytica (strain CLIB 122 / E 150) (Yeast).